The sequence spans 315 residues: Voltage-dependent calcium channel gamma-3 subunit (315 aa).

4 helical membrane passes run 8-28 (IQMLITTVGAFAAFSLMTIAV), 104-124 (SSVFPILSVTLLFFGGLCVAA), 135-155 (ILSAGIFFVSAGLSNIIGIIV), and 181-201 (FGAFSFIIAEIVGVVAVHIYI). Residues 232–253 (RRRSSSRSTEPRSRDLSPISKG) are disordered. Ser248 carries the post-translational modification Phosphoserine.

It belongs to the PMP-22/EMP/MP20 family. CACNG subfamily. As to quaternary structure, the L-type calcium channel is composed of five subunits: alpha-1, alpha-2/delta, beta and gamma. Acts as an auxiliary subunit for AMPA-selective glutamate receptors (AMPARs). Found in a complex with GRIA1, GRIA2, GRIA3, GRIA4, CNIH2, CNIH3, CACNG2, CACNG4, CACNG5, CACNG7 and CACNG8. Interacts with AP4M1 and GRIA1; associates GRIA1 with the adaptor protein complex 4 (AP-4) to target GRIA1 to the somatodendritic compartment of neurons.

The protein resides in the membrane. In terms of biological role, regulates the trafficking to the somatodendritic compartment and gating properties of AMPA-selective glutamate receptors (AMPARs). Promotes their targeting to the cell membrane and synapses and modulates their gating properties by slowing their rates of activation, deactivation and desensitization. Does not show subunit-specific AMPA receptor regulation and regulates all AMPAR subunits. Thought to stabilize the calcium channel in an inactivated (closed) state. This is Voltage-dependent calcium channel gamma-3 subunit (Cacng3) from Mus musculus (Mouse).